Consider the following 265-residue polypeptide: Undecaprenyl-diphosphatase (265 aa).

Helical transmembrane passes span 42-62 (EAIP…IVYF), 90-110 (ISFL…LLLF), 115-135 (VEIS…VTGI), 160-182 (VAQG…ALLL), 195-215 (FLMS…MGMV), 222-242 (IVGL…FLKV), and 245-265 (KVDF…TMFL).

It belongs to the UppP family.

It localises to the cell membrane. It catalyses the reaction di-trans,octa-cis-undecaprenyl diphosphate + H2O = di-trans,octa-cis-undecaprenyl phosphate + phosphate + H(+). Catalyzes the dephosphorylation of undecaprenyl diphosphate (UPP). This Methanococcoides burtonii (strain DSM 6242 / NBRC 107633 / OCM 468 / ACE-M) protein is Undecaprenyl-diphosphatase.